The following is an 843-amino-acid chain: Eisosome protein 1 (843 aa).

The tract at residues 1–53 (MSLISAVEDRDIHNIGKTSGGGSRTSSITSSKKSLKHGSKSLRKPKVYQTTGE) is disordered. Position 2 is an N-acetylserine (Ser2). A Phosphoserine modification is found at Ser2. A compositionally biased stretch (basic residues) spans 33 to 46 (KSLKHGSKSLRKPK). Ser88 and Ser130 each carry phosphoserine. The disordered stretch occupies residues 120–174 (KMGPKVVRNNSITSATSKTSKESQTKRKSKESPGAAASKAYSMTMETTSLSSQTN). Composition is skewed to polar residues over residues 127-137 (RNNSITSATSK) and 163-174 (TMETTSLSSQTN). 4 positions are modified to phosphoserine: Ser182, Ser401, Ser584, and Ser710. The disordered stretch occupies residues 717-843 (DLPTQLEKIE…QDAISNQEKK (127 aa)). Thr720 carries the phosphothreonine modification. The span at 752–764 (STAAKEATETSSA) shows a compositional bias: low complexity. Phosphoserine occurs at positions 763 and 775. A compositionally biased stretch (basic and acidic residues) spans 781–797 (SGKEDANDCKSAEHSKE). Polar residues predominate over residues 798–810 (ISVSQKAGNNKSL). Ser816, Ser828, Ser829, and Ser838 each carry phosphoserine.

The protein belongs to the EIS1 family.

Its subcellular location is the cytoplasmic granule. The protein localises to the cell membrane. Required for normal formation of eisosomes, large cytoplasmic protein assemblies that localize to specialized domains on plasma membrane and mark the site of endocytosis. The sequence is that of Eisosome protein 1 (EIS1) from Saccharomyces cerevisiae (strain ATCC 204508 / S288c) (Baker's yeast).